We begin with the raw amino-acid sequence, 637 residues long: MAATPAASGSNPRKFSEKIALHNQKQAEETRAFDELMSDLTVSRVQFQKLQQLRLAQSRAQYYGGSLPNVNQISSSPTDFQPSFHPTDNIRGMRHHGLVERVSRNRLHSSHHRPIEKHGRQCDSSPYGSVYLSPPPDNNWRRTNSDSALHTSASSTKSQDPFMGGAQAMLRAPKPPQRNTSLQDGEIDNFGEVFSFPNAMTEENMLNVTKPLPKQIWEAQKVQCITSRPRSCEVPNIKVFPSSDSNASLSHFQGSLNTGGSLPDLTNLHFPSPLPTPLDPDDTAYANISAENSSGLPAAMTHLGISGSPGMQNTRSNPSIQATMNNNSLASNVNSHTPPGRNNPALHPSLRLSSLSNPSLPTSALGTSPRRRHTPVSPLTLTPGSESNRSISNQFSPTSPMNMPPNSQGVSMDRSPLSLPPLEPPPPYPLYSDQPQPHLHHTQQQMHESLDSQNYQPPSPVPCPPLDLNLANSSLSGFFGDSFFDQQQPTKQGKYLWQQQEQYDMFGSPSSSLPNTNAFFDPNMNLQYSQASLMGLGGSHGSLQDSFHLRPNYLYSNCGGSVPNIILTDDSSNSLSKDISNAVAGVSELGFDADNTFQLDDELKLGPLSLDGLSMLSDPDMVLPDPSIEDSFRSDKL.

The residue at position 66 (S66) is a Phosphoserine. Residues 105-115 (NRLHSSHHRPI) are compositionally biased toward basic residues. Disordered regions lie at residues 105–184 (NRLH…SLQD) and 269–288 (HFPS…YANI). S133 is subject to Phosphoserine. The residue at position 143 (T143) is a Phosphothreonine. S145 carries the phosphoserine; by SIK2 modification. Polar residues predominate over residues 145 to 159 (SDSALHTSASSTKSQ). Position 151 is a phosphothreonine (T151). The residue at position 293 (S293) is a Phosphoserine. A disordered region spans residues 299–462 (AMTHLGISGS…QNYQPPSPVP (164 aa)). Residues 309 to 337 (PGMQNTRSNPSIQATMNNNSLASNVNSHT) show a composition bias toward polar residues. Residues 344–365 (PALHPSLRLSSLSNPSLPTSAL) are compositionally biased toward low complexity. 2 positions are modified to phosphoserine: S377 and S396. Residues 377 to 395 (SPLTLTPGSESNRSISNQF) show a composition bias toward polar residues. The segment covering 396–407 (SPTSPMNMPPNS) has biased composition (low complexity). A compositionally biased stretch (pro residues) spans 418–429 (SLPPLEPPPPYP). Over residues 430–447 (LYSDQPQPHLHHTQQQMH) the composition is skewed to low complexity. Phosphoserine is present on S561. The disordered stretch occupies residues 615–637 (MLSDPDMVLPDPSIEDSFRSDKL).

It belongs to the TORC family. As to quaternary structure, binding, as a tetramer, through its N-terminal region, with the bZIP domain of creb1 enhances recruitment of taf4 to the promoter. 'Arg-300' in the bZIP domain of creb1 is essential for this interaction.

The protein resides in the nucleus. It localises to the cytoplasm. In terms of biological role, transcriptional coactivator for creb1 which activates transcription through both consensus and variant cAMP response element (CRE) sites. Acts as a coactivator, in the SIK/TORC signaling pathway, being active when dephosphorylated and acts independently of creb1 'Ser-119' phosphorylation. Enhances the interaction of creb1 with taf4. Regulates the expression of specific CREB-activated genes such as the steroidogenic gene, StAR. Potent coactivator of ppargc1a and inducer of mitochondrial biogenesis in muscle cells. In Xenopus tropicalis (Western clawed frog), this protein is CREB-regulated transcription coactivator 3 (crtc3).